The chain runs to 139 residues: 3-hydroxyacyl-[acyl-carrier-protein] dehydratase FabZ (139 aa).

His47 is a catalytic residue.

It belongs to the thioester dehydratase family. FabZ subfamily.

The protein localises to the cytoplasm. It catalyses the reaction a (3R)-hydroxyacyl-[ACP] = a (2E)-enoyl-[ACP] + H2O. Its function is as follows. Involved in unsaturated fatty acids biosynthesis. Catalyzes the dehydration of short chain beta-hydroxyacyl-ACPs and long chain saturated and unsaturated beta-hydroxyacyl-ACPs. This Oenococcus oeni (strain ATCC BAA-331 / PSU-1) protein is 3-hydroxyacyl-[acyl-carrier-protein] dehydratase FabZ.